Reading from the N-terminus, the 454-residue chain is Toluate 1,2-dioxygenase subunit alpha (454 aa).

A Rieske domain is found at 51-148 (IYLAHESQIP…SFDCDGSHDL (98 aa)). Residues Cys-92, His-94, Cys-112, and His-115 each contribute to the [2Fe-2S] cluster site. Positions 221 and 226 each coordinate Fe cation.

The protein belongs to the bacterial ring-hydroxylating dioxygenase alpha subunit family. This dioxygenase system consists of three proteins: the two subunits of the hydroxylase component (XylX and XylY), and an electron transfer component (XylZ). [2Fe-2S] cluster is required as a cofactor. The cofactor is Fe cation.

It functions in the pathway xenobiotic degradation; toluene degradation. This is Toluate 1,2-dioxygenase subunit alpha (xylX) from Pseudomonas putida (Arthrobacter siderocapsulatus).